We begin with the raw amino-acid sequence, 136 residues long: Mini-ribonuclease 3 (136 aa).

Aspartate 20 is an active-site residue.

The protein belongs to the MrnC RNase family. As to quaternary structure, homodimer. Mg(2+) serves as cofactor.

The protein localises to the cytoplasm. Its function is as follows. Involved in correct processing of both the 5' and 3' ends of 23S rRNA precursor. Processes 30S rRNA precursor transcript even in absence of ribonuclease 3 (Rnc); Rnc processes 30S rRNA into smaller rRNA precursors. This is Mini-ribonuclease 3 from Listeria monocytogenes serovar 1/2a (strain ATCC BAA-679 / EGD-e).